The primary structure comprises 555 residues: Glypican-6 (555 aa).

The N-terminal stretch at 1-23 (MPSWIGAVILPLLGLLLSLPAGA) is a signal peptide. Residues 348-357 (PALRSARSAP) are compositionally biased toward low complexity. Disordered stretches follow at residues 348-376 (PALRSARSAPENFNTRFRPYNPEERPTTA) and 480-501 (GNDVNFQDTSDESSGSGSGSGC). Ser-529 carries the GPI-anchor amidated serine lipid modification. Positions 530 to 555 (SAAQRGHSLLSWSLTCIVLALQRLCR) are cleaved as a propeptide — removed in mature form.

This sequence belongs to the glypican family. In terms of tissue distribution, widely expressed. High expression in fetal kidney and lung and lower expressions in fetal liver and brain. In adult tissues, very abundant in ovary, high levels also observed in liver, kidney, small intestine and colon. Not detected in peripheral blood leukocytes. Detected in breast cancer cells (at protein level).

It localises to the cell membrane. Its subcellular location is the secreted. The protein localises to the extracellular space. Functionally, cell surface proteoglycan that bears heparan sulfate. Putative cell surface coreceptor for growth factors, extracellular matrix proteins, proteases and anti-proteases. Enhances migration and invasion of cancer cells through WNT5A signaling. The chain is Glypican-6 (GPC6) from Homo sapiens (Human).